Consider the following 1002-residue polypeptide: Copper-transporting ATPase HMA5 (1002 aa).

A compositionally biased stretch (low complexity) spans 32–48 (RPRYPSMPRRPRSAAVA). The segment at 32–63 (RPRYPSMPRRPRSAAVAGEGGEGGGGGGDGDL) is disordered. Over residues 49-60 (GEGGEGGGGGGD) the composition is skewed to gly residues. 3 consecutive HMA domains span residues 75-141 (KVAV…FEAK), 153-219 (LVCR…FEAI), and 228-294 (SRID…SGDL). 4 residues coordinate Cu(+): Cys-86, Cys-89, Cys-164, and Cys-167. The next 8 membrane-spanning stretches (helical) occupy residues 320 to 340 (FLWS…FMYI), 354 to 374 (MMSI…FVIG), 392 to 412 (MDVL…YSIL), 425 to 445 (FFET…LEIL), 585 to 605 (VFVP…FLAG), 624 to 644 (LALQ…LGLA), 943 to 963 (YVWA…VLFP), and 972 to 992 (WVAG…SLLL).

The protein belongs to the cation transport ATPase (P-type) (TC 3.A.3) family. Type IB subfamily. Expressed in root pericycle cells, xylem region of diffuse vascular bundles in the first node, and vascular tissues of peduncle, rachis and husk.

Its subcellular location is the cell membrane. The catalysed reaction is Cu(+)(in) + ATP + H2O = Cu(+)(out) + ADP + phosphate + H(+). Its function is as follows. Copper (Cu) transporter that plays an essential role in promoting translocation of Cu from roots to shoots. Involved in loading Cu to the xylem of the roots and other organs, including panicles. The sequence is that of Copper-transporting ATPase HMA5 from Oryza sativa subsp. japonica (Rice).